The chain runs to 124 residues: Large ribosomal subunit protein bL12 (124 aa).

This sequence belongs to the bacterial ribosomal protein bL12 family. In terms of assembly, homodimer. Part of the ribosomal stalk of the 50S ribosomal subunit. Forms a multimeric L10(L12)X complex, where L10 forms an elongated spine to which 2 to 4 L12 dimers bind in a sequential fashion. Binds GTP-bound translation factors.

In terms of biological role, forms part of the ribosomal stalk which helps the ribosome interact with GTP-bound translation factors. Is thus essential for accurate translation. This chain is Large ribosomal subunit protein bL12, found in Brucella abortus (strain S19).